A 513-amino-acid chain; its full sequence is GMP synthase [glutamine-hydrolyzing] (513 aa).

In terms of domain architecture, Glutamine amidotransferase type-1 spans 9–198; the sequence is LILVLDFGSQ…VRRVCECKGQ (190 aa). Cys86 functions as the Nucleophile in the catalytic mechanism. Active-site residues include His172 and Glu174. The GMPS ATP-PPase domain occupies 199–388; it reads WTMENFIEIE…LGIPEHLVWR (190 aa). 226–232 provides a ligand contact to ATP; sequence SGGVDSS.

In terms of assembly, homodimer.

It carries out the reaction XMP + L-glutamine + ATP + H2O = GMP + L-glutamate + AMP + diphosphate + 2 H(+). Its pathway is purine metabolism; GMP biosynthesis; GMP from XMP (L-Gln route): step 1/1. Functionally, catalyzes the synthesis of GMP from XMP. This Staphylococcus aureus (strain MSSA476) protein is GMP synthase [glutamine-hydrolyzing].